Here is a 473-residue protein sequence, read N- to C-terminus: Cell division protein FtsP (473 aa).

Positions 1 to 27 form a signal peptide, tat-type signal; it reads MSFSRRQFIQVSGLAMCIGAAPLLVRA.

The protein belongs to the FtsP family. Predicted to be exported by the Tat system. The position of the signal peptide cleavage has not been experimentally proven.

The protein resides in the periplasm. Its function is as follows. Cell division protein that is required for growth during stress conditions. May be involved in protecting or stabilizing the divisomal assembly under conditions of stress. This is Cell division protein FtsP from Photorhabdus laumondii subsp. laumondii (strain DSM 15139 / CIP 105565 / TT01) (Photorhabdus luminescens subsp. laumondii).